The chain runs to 875 residues: DNA mismatch repair protein MutS (875 aa).

625–632 (GPNMGGKS) contributes to the ATP binding site.

This sequence belongs to the DNA mismatch repair MutS family.

In terms of biological role, this protein is involved in the repair of mismatches in DNA. It is possible that it carries out the mismatch recognition step. This protein has a weak ATPase activity. In Symbiobacterium thermophilum (strain DSM 24528 / JCM 14929 / IAM 14863 / T), this protein is DNA mismatch repair protein MutS.